A 118-amino-acid chain; its full sequence is D-dopachrome decarboxylase (118 aa).

An N-acetylproline modification is found at proline 2. Lysine 33 carries the N6-acetyllysine modification. Serine 90 is modified (phosphoserine).

This sequence belongs to the MIF family. Homotrimer.

It is found in the cytoplasm. The catalysed reaction is D-dopachrome + H(+) = 5,6-dihydroxyindole + CO2. Functionally, tautomerization of D-dopachrome with decarboxylation to give 5,6-dihydroxyindole (DHI). This Mus musculus (Mouse) protein is D-dopachrome decarboxylase (Ddt).